The chain runs to 22 residues: Myofibril-bound serine protease (22 aa).

Belongs to the peptidase S1 family. In terms of tissue distribution, detected in muscle (at protein level).

It is found in the cytoplasm. Inhibited by the serine protease inhibitors, antipain, aprotinin, DFP, leupeptin, STI and TLCK, and by the cysteine proteinase inhibitors DTNB and to a lesser extent E-64. Not inhibited by the metalloproteinase inhibitor EDTA. Serine protease that selectively cleaves Arg-|-Xaa bonds. This Cyprinus carpio (Common carp) protein is Myofibril-bound serine protease.